The chain runs to 464 residues: Gamma-aminobutyric acid receptor subunit rho-3 (464 aa).

The first 15 residues, 1–15 (MVLAFWLAFFTYTWI), serve as a signal peptide directing secretion. The Extracellular segment spans residues 16 to 263 (TLMLDASAVK…LFINFVLRRH (248 aa)). Arg108 contacts 4-aminobutanoate. Asn123 carries N-linked (GlcNAc...) asparagine glycosylation. Residue Ser172 participates in 4-aminobutanoate binding. An intrachain disulfide couples Cys181 to Cys195. Residue Asn194 is glycosylated (N-linked (GlcNAc...) asparagine). Residue Glu200 coordinates 4-aminobutanoate. Residues 264–284 (IFFFVLQTYFPAMLMVMLSWV) traverse the membrane as a helical segment. Topologically, residues 285 to 296 (SFWIDRRAVPAR) are cytoplasmic. A helical transmembrane segment spans residues 297 to 317 (VSLGITTVLTMSTIVTGVSAS). Over 318 to 328 (MPQVSYVKAVD) the chain is Extracellular. The helical transmembrane segment at 329–349 (VYMWVSSLFVFLSVIEYAAVN) threads the bilayer. Residues 344 to 445 (EYAAVNYLTT…NNHVIDTYSR (102 aa)) are interaction with SQSTM1. Topologically, residues 350–443 (YLTTVEEWKQ…LENNHVIDTY (94 aa)) are cytoplasmic. A helical membrane pass occupies residues 444–464 (SRIVFPVVYIIFNLFYWGIYV).

The protein belongs to the ligand-gated ion channel (TC 1.A.9) family. Gamma-aminobutyric acid receptor (TC 1.A.9.5) subfamily. GABRR3 sub-subfamily. In terms of assembly, three rho subunits (rho-1/GBRR1, rho-2/GBRR2 and rho-3/GBRR3) coassemble either to form functional homopentamers or heteropentamers. Forms a ternary complex with SQSTM1 and PRKCZ. In terms of tissue distribution, expressed in retina.

The protein resides in the postsynaptic cell membrane. It localises to the cell membrane. The catalysed reaction is chloride(in) = chloride(out). Activated by agonists in the following the potency order: muscimol &gt; TACP &gt; TACA &gt; thiomuscimol &gt; CAMP &gt; CACA, when forming a homopentamer. Inhibited by TPMPA, a rho-specific antagonist, when forming a homopentamer. Inhibited antagonists in the following the potency order: TAMP = TPMPA &gt; P4MPA = THIP &gt; 14AA &gt; 3-APA, when forming a homopentamer. In terms of biological role, rho subunit of the pentameric ligand-gated chloride channels responsible for mediating the effects of gamma-aminobutyric acid (GABA), the major inhibitory neurotransmitter in the brain. Rho-containing GABA-gated chloride channels are a subclass of GABA(A) receptors (GABAARs) entirely composed of rho subunits, where GABA molecules bind at the rho intersubunit interfaces. When activated by GABA, rho-GABAARs selectively allow the flow of chloride anions across the cell membrane down their electrochemical gradient. The sequence is that of Gamma-aminobutyric acid receptor subunit rho-3 from Rattus norvegicus (Rat).